A 419-amino-acid polypeptide reads, in one-letter code: Effector protein BipC (419 aa).

2 disordered regions span residues 62–91 and 338–402; these read VAGS…TVSG and LQSG…AKSQ. Composition is skewed to basic and acidic residues over residues 71-91 and 380-392; these read ELAR…TVSG and TRDE…REAA.

This sequence belongs to the SctB/SipC family.

The protein resides in the secreted. This chain is Effector protein BipC (bipC), found in Burkholderia mallei (strain NCTC 10247).